We begin with the raw amino-acid sequence, 267 residues long: tRNA (guanine-N(1)-)-methyltransferase (267 aa).

Residues Gly119 and 139 to 144 (IGDYVL) each bind S-adenosyl-L-methionine.

Belongs to the RNA methyltransferase TrmD family. Homodimer.

It localises to the cytoplasm. The enzyme catalyses guanosine(37) in tRNA + S-adenosyl-L-methionine = N(1)-methylguanosine(37) in tRNA + S-adenosyl-L-homocysteine + H(+). In terms of biological role, specifically methylates guanosine-37 in various tRNAs. The chain is tRNA (guanine-N(1)-)-methyltransferase from Chromohalobacter salexigens (strain ATCC BAA-138 / DSM 3043 / CIP 106854 / NCIMB 13768 / 1H11).